The chain runs to 76 residues: MPSHQHQNQQQCTPQAQQQQVKQPCQPPPTKCQEACVPKTKDPCVPQAKKQCPARSTTNPAQEKCPAQQDPKCKQK.

Residues 38-76 (PKTKDPCVPQAKKQCPARSTTNPAQEKCPAQQDPKCKQK) are disordered.

Belongs to the cornifin (SPRR) family. Cross-linked to membrane proteins by transglutaminase.

The protein resides in the cytoplasm. The protein localises to the cell cortex. Cross-linked envelope protein of keratinocytes. Involved in UV-induced cornification. In Mus musculus (Mouse), this protein is Small proline-rich protein 4 (Sprr4).